The chain runs to 1481 residues: MQRSPLEKASVVSKLFFSWTRPILRKGYRQRLELSDIYQIPSADSADNLSEKLEREWDRELASKKNPKLINALRRCFFWRFMFYGILLYLGEVTKAVQPLLLGRIIASYDPDNKEERSIAIYLGIGLCLLFIVRTLLLHPAIFGLHHIGMQMRIAMFSLIYKKTLKLSSRVLDKISIGQLVSLLSNNLNKFDEGLALAHFVWIVPLQVALLMGLIWELLQASAFCGLGFLIVLALFQAGLGRMMMKYRDQRAGKINERLVITSEMIENIQSVKAYCWEEAMEKMIENLRQTELKLTRKAAYVRYFNSSAFFFSGFFVVFLSVLPYALIKGIVLRKIFTTISFCIVLRMAVTRQFPWAVQTWYDSLGAINKIQDFLQKQEYKTLEYNLTTTEVVMENVTAFWEEGFGELFEKAKQNNSNRKTSNDDDSLFFSNFSLLGTPVLKDINFKIERGQLLAVAGSTGAGKTSLLMMIMGELEPSEGKIKHSGRISFCSQFSWIMPGTIKENIIFGVSYDEYRYRSVINACQLEEDISKFAEKDNIVLGEGGITLSGGQRARISLARAVYKDADLYLLDSPFGYLDVLTEKEIFESCVCKLMANKTRILVTSKMEHLKKADKILILHEGSSYFYGTFSELQNLRPDFSSKLMGYDSFDQFSAERRNSILTETLRRFSLEGDAPVSWTETKKQSFKQTGEFGEKRKNSILNPINSIRKFSIVQKTPLQMNGIEEDSDEPLERRLSLVPDSEQGEVILPRISVISTGPTLQARRRQSVLNLMTHSVNQGQSIHRKTAASTRKVSLAPQANLTELDIYSRRLSQETGLEISEEINEEDLKECFFDDMESIPAVTTWNTYLRYITVHKSLIFVLIWCLVIFLAEVAASLVVLWFLGNTPPQDKGNSTYSRNNSYAVIITRTSSYYVFYIYVGVADTLLAMGFFRGLPLVHTLITVSKILHHKMLHSVLQAPMSTLNTLKAGGILNRFSKDIAILDDLLPLTIFDFIQLLLIVIGAIAVVAVLQPYIFVATVPVIVAFIMLRAYFLQTSQQLKQLESEGRSPIFTHLVTSLKGLWTLRAFGRQPYFETLFHKALNLHTANWFLYLSTLRWFQMRIEMIFVIFFIAVTFISILTTGEGEGTVGIILTLAMNIMSTLQWAVNSSIDVDSLMRSVSRVFKFIDMPTEEGKPTRSTKPYKNGQLSKVMVIENSHVKKDDIWPSGGQMTVKDLTAKYTEGGNPILENISFSISPGQRVGLLGRTGSGKSTLLSAFLRLLNTEGEIQIDGVSWDSITLQQWRKAFGVIPQKVFIFSGTFRKNLDPYEQWSDQEIWKVADEVGLRSVIEQFPGKLDFVLVDGGCVLSHGHKQLMCLARSVLSKAKILLLDEPSAHLDPVTYQIIRRTLKQAFADCTVILCEHRIEAMLECQQFLVIEENKVRQYDSIQKLLNERSLFRQAISPSDRVKLFPHRNSSKCKSQPQIAALKEETEEEVQDTRL.

Residues 1-77 (MQRSPLEKAS…KLINALRRCF (77 aa)) lie on the Cytoplasmic side of the membrane. Residues 78–98 (FWRFMFYGILLYLGEVTKAVQ) form a helical membrane-spanning segment. One can recognise an ABC transmembrane type-1 1 domain in the interval 81-365 (FMFYGILLYL…WAVQTWYDSL (285 aa)). Residues 99–122 (PLLLGRIIASYDPDNKEERSIAIY) are Extracellular-facing. A helical transmembrane segment spans residues 123–146 (LGIGLCLLFIVRTLLLHPAIFGLH). The Cytoplasmic segment spans residues 147–195 (HIGMQMRIAMFSLIYKKTLKLSSRVLDKISIGQLVSLLSNNLNKFDEGL). The helical transmembrane segment at 196-216 (ALAHFVWIVPLQVALLMGLIW) threads the bilayer. At 217–222 (ELLQAS) the chain is on the extracellular side. Residues 223–243 (AFCGLGFLIVLALFQAGLGRM) traverse the membrane as a helical segment. At 244–298 (MMKYRDQRAGKINERLVITSEMIENIQSVKAYCWEEAMEKMIENLRQTELKLTRK) the chain is on the cytoplasmic side. Residues 299–319 (AAYVRYFNSSAFFFSGFFVVF) form a helical membrane-spanning segment. The Extracellular segment spans residues 320–339 (LSVLPYALIKGIVLRKIFTT). Residues 340 to 358 (ISFCIVLRMAVTRQFPWAV) form a helical membrane-spanning segment. Topologically, residues 359 to 858 (QTWYDSLGAI…YLRYITVHKS (500 aa)) are cytoplasmic. ATP is bound by residues tryptophan 401, serine 434, 458–465 (GSTGAGKT), and glutamine 493. An ABC transporter 1 domain is found at 423–646 (NDDDSLFFSN…RPDFSSKLMG (224 aa)). A lipid anchor (S-palmitoyl cysteine) is attached at cysteine 524. A phosphoserine mark is found at serine 549 and serine 660. The segment at 654–831 (SAERRNSILT…EEINEEDLKE (178 aa)) is disordered R region. Serine 670 carries the phosphoserine; by PKA modification. Serine 686 is subject to Phosphoserine. Lysine 688 participates in a covalent cross-link: Glycyl lysine isopeptide (Lys-Gly) (interchain with G-Cter in ubiquitin). Phosphoserine is present on residues serine 700 and serine 712. Position 717 is a phosphothreonine (threonine 717). Residues serine 737, serine 753, serine 768, serine 790, serine 795, and serine 813 each carry the phosphoserine modification. The helical transmembrane segment at 859–879 (LIFVLIWCLVIFLAEVAASLV) threads the bilayer. In terms of domain architecture, ABC transmembrane type-1 2 spans 859–1155 (LIFVLIWCLV…AVNSSIDVDS (297 aa)). Residues 880–918 (VLWFLGNTPPQDKGNSTYSRNNSYAVIITRTSSYYVFYI) are Extracellular-facing. N-linked (GlcNAc...) asparagine glycans are attached at residues asparagine 894 and asparagine 900. The chain crosses the membrane as a discontinuously helical span at residues 919–939 (YVGVADTLLAMGFFRGLPLVH). Residues 940-990 (TLITVSKILHHKMLHSVLQAPMSTLNTLKAGGILNRFSKDIAILDDLLPLT) are Cytoplasmic-facing. The chain crosses the membrane as a helical span at residues 991–1011 (IFDFIQLLLIVIGAIAVVAVL). Topologically, residues 1012–1013 (QP) are extracellular. The chain crosses the membrane as a helical span at residues 1014–1034 (YIFVATVPVIVAFIMLRAYFL). The Cytoplasmic portion of the chain corresponds to 1035–1095 (QTSQQLKQLE…TANWFLYLST (61 aa)). The chain crosses the membrane as a helical span at residues 1096–1116 (LRWFQMRIEMIFVIFFIAVTF). Residues 1117–1130 (ISILTTGEGEGTVG) lie on the Extracellular side of the membrane. A helical membrane pass occupies residues 1131–1151 (IILTLAMNIMSTLQWAVNSSI). Residues 1152-1481 (DVDSLMRSVS…TEEEVQDTRL (330 aa)) lie on the Cytoplasmic side of the membrane. In terms of domain architecture, ABC transporter 2 spans 1211 to 1444 (MTVKDLTAKY…RSLFRQAISP (234 aa)). ATP-binding positions include tyrosine 1220 and 1245-1252 (GRTGSGKS). Residues 1387–1481 (RTLKQAFADC…TEEEVQDTRL (95 aa)) are interaction with GORASP2. Cysteine 1396 carries the S-palmitoyl cysteine lipid modification. 2 positions are modified to phosphoserine: serine 1445 and serine 1457. The tract at residues 1462 to 1481 (QPQIAALKEETEEEVQDTRL) is disordered. The segment covering 1471 to 1481 (ETEEEVQDTRL) has biased composition (acidic residues). Positions 1479 to 1481 (TRL) match the PDZ-binding motif.

It belongs to the ABC transporter superfamily. ABCC family. CFTR transporter (TC 3.A.1.202) subfamily. In terms of assembly, monomer; does not require oligomerization for channel activity. May form oligomers in the membrane. Interacts with SLC26A3, SLC26A6 and NHERF1. Interacts with SHANK2. Interacts with MYO6. Interacts (via C-terminus) with GOPC (via PDZ domain); this promotes CFTR internalization and thereby decreases channel activity. Interacts with SLC4A7 through NHERF1. Found in a complex with MYO5B and RAB11A. Interacts with ANO1. Interacts with SLC26A8. Interacts with AHCYL1; the interaction increases CFTR activity. Interacts with CSE1L. The core-glycosylated form interacts with GORASP2 (via PDZ GRASP-type 1 domain) in respone to ER stress. Interacts with MARCHF2; the interaction leads to CFTR ubiqtuitination and degradation. Interacts with ADGRG2. N-glycosylated. Post-translationally, phosphorylated; cAMP treatment promotes phosphorylation and activates the channel. Dephosphorylation decreases the ATPase activity (in vitro). Phosphorylation at PKA sites activates the channel. Phosphorylation at PKC sites enhances the response to phosphorylation by PKA. Phosphorylated by AMPK; this inhibits channel activity. In terms of processing, ubiquitinated, leading to its degradation in the lysosome. Deubiquitination by USP10 in early endosomes enhances its endocytic recycling to the cell membrane. Ubiquitinated by RNF185 during ER stress. Ubiquitinated by MARCHF2.

It localises to the apical cell membrane. Its subcellular location is the early endosome membrane. The protein localises to the cell membrane. It is found in the recycling endosome membrane. The protein resides in the endoplasmic reticulum membrane. It localises to the nucleus. It catalyses the reaction ATP + H2O + closed Cl(-) channel = ADP + phosphate + open Cl(-) channel.. The catalysed reaction is chloride(in) = chloride(out). It carries out the reaction hydrogencarbonate(in) = hydrogencarbonate(out). The enzyme catalyses ATP + H2O = ADP + phosphate + H(+). Functionally, epithelial ion channel that plays an important role in the regulation of epithelial ion and water transport and fluid homeostasis. Mediates the transport of chloride ions across the cell membrane. Possesses an intrinsic ATPase activity and utilizes ATP to gate its channel; the passive flow of anions through the channel is gated by cycles of ATP binding and hydrolysis by the ATP-binding domains. The ion channel is also permeable to HCO(3)(-); selectivity depends on the extracellular chloride concentration. Exerts its function also by modulating the activity of other ion channels and transporters. Contributes to the regulation of the pH and the ion content of the epithelial fluid layer. Modulates the activity of the epithelial sodium channel (ENaC) complex, in part by regulating the cell surface expression of the ENaC complex. May regulate bicarbonate secretion and salvage in epithelial cells by regulating the transporter SLC4A7. Can inhibit the chloride channel activity of ANO1. Plays a role in the chloride and bicarbonate homeostasis during sperm epididymal maturation and capacitation. The sequence is that of Cystic fibrosis transmembrane conductance regulator from Papio anubis (Olive baboon).